Reading from the N-terminus, the 432-residue chain is Peptidyl-prolyl cis-trans isomerase cyp6 (432 aa).

Residues 1 to 168 (MSVLIETTVG…RDIRIKHTII (168 aa)) enclose the PPIase cyclophilin-type domain. Phosphoserine is present on S206. Residues 244–322 (NVLFVCKLNP…SRIHVDFSQS (79 aa)) enclose the RRM domain. Positions 330 to 432 (YNSNRDRKRS…DRRYRDDRYR (103 aa)) are disordered. Composition is skewed to basic and acidic residues over residues 341–366 (SRSD…DDYR), 373–395 (DHRD…DDRS), and 406–432 (NCDD…DRYR).

The protein belongs to the cyclophilin-type PPIase family. PPIL4 subfamily.

It is found in the nucleus. The enzyme catalyses [protein]-peptidylproline (omega=180) = [protein]-peptidylproline (omega=0). Functionally, PPIases accelerate the folding of proteins. It catalyzes the cis-trans isomerization of proline imidic peptide bonds in oligopeptides. In Schizosaccharomyces pombe (strain 972 / ATCC 24843) (Fission yeast), this protein is Peptidyl-prolyl cis-trans isomerase cyp6 (cyp6).